A 397-amino-acid chain; its full sequence is Cytochrome b (397 aa).

4 helical membrane-spanning segments follow: residues 38–58, 82–104, 119–139, and 185–205; these read FGSL…FLAM, WLLR…LHIF, VWCL…IGYV, and FFSL…LHLA. Residues His88 and His102 each coordinate heme b. Positions 189 and 203 each coordinate heme b. His208 contacts a ubiquinone. 4 helical membrane-spanning segments follow: residues 231–251, 295–315, 327–347, and 354–373; these read FYVK…IWIF, AGGV…PFFK, IYQG…WIGC, and FVTI…AITP.

It belongs to the cytochrome b family. As to quaternary structure, the main subunits of complex b-c1 are: cytochrome b, cytochrome c1 and the Rieske protein. Heme b serves as cofactor.

It is found in the mitochondrion inner membrane. Its function is as follows. Component of the ubiquinol-cytochrome c reductase complex (complex III or cytochrome b-c1 complex) that is part of the mitochondrial respiratory chain. The b-c1 complex mediates electron transfer from ubiquinol to cytochrome c. Contributes to the generation of a proton gradient across the mitochondrial membrane that is then used for ATP synthesis. In Oryza sativa subsp. japonica (Rice), this protein is Cytochrome b (MT-CYB).